The following is a 158-amino-acid chain: 2-C-methyl-D-erythritol 2,4-cyclodiphosphate synthase (158 aa).

D8 and H10 together coordinate a divalent metal cation. 4-CDP-2-C-methyl-D-erythritol 2-phosphate contacts are provided by residues 8-10 and 34-35; these read DSH and HS. Residue H42 coordinates a divalent metal cation. 4-CDP-2-C-methyl-D-erythritol 2-phosphate is bound by residues 56-58, 61-65, and R142; these read DIG and FPDND.

This sequence belongs to the IspF family. Homotrimer. A divalent metal cation serves as cofactor.

It catalyses the reaction 4-CDP-2-C-methyl-D-erythritol 2-phosphate = 2-C-methyl-D-erythritol 2,4-cyclic diphosphate + CMP. Its pathway is isoprenoid biosynthesis; isopentenyl diphosphate biosynthesis via DXP pathway; isopentenyl diphosphate from 1-deoxy-D-xylulose 5-phosphate: step 4/6. Involved in the biosynthesis of isopentenyl diphosphate (IPP) and dimethylallyl diphosphate (DMAPP), two major building blocks of isoprenoid compounds. Catalyzes the conversion of 4-diphosphocytidyl-2-C-methyl-D-erythritol 2-phosphate (CDP-ME2P) to 2-C-methyl-D-erythritol 2,4-cyclodiphosphate (ME-CPP) with a corresponding release of cytidine 5-monophosphate (CMP). This Brachyspira hyodysenteriae (strain ATCC 49526 / WA1) protein is 2-C-methyl-D-erythritol 2,4-cyclodiphosphate synthase.